The primary structure comprises 685 residues: DNA ligase (685 aa).

Residues 48–52 (DAEYD), 97–98 (SL), and Glu-131 each bind NAD(+). The N6-AMP-lysine intermediate role is filled by Lys-133. Positions 154, 190, 304, and 328 each coordinate NAD(+). Residues Cys-422, Cys-425, Cys-440, and Cys-445 each coordinate Zn(2+). The 83-residue stretch at 603–685 (PEEGPLSGRR…RLLSGEERPG (83 aa)) folds into the BRCT domain.

This sequence belongs to the NAD-dependent DNA ligase family. LigA subfamily. Mg(2+) serves as cofactor. It depends on Mn(2+) as a cofactor.

The catalysed reaction is NAD(+) + (deoxyribonucleotide)n-3'-hydroxyl + 5'-phospho-(deoxyribonucleotide)m = (deoxyribonucleotide)n+m + AMP + beta-nicotinamide D-nucleotide.. DNA ligase that catalyzes the formation of phosphodiester linkages between 5'-phosphoryl and 3'-hydroxyl groups in double-stranded DNA using NAD as a coenzyme and as the energy source for the reaction. It is essential for DNA replication and repair of damaged DNA. The chain is DNA ligase from Rubrobacter xylanophilus (strain DSM 9941 / JCM 11954 / NBRC 16129 / PRD-1).